A 209-amino-acid chain; its full sequence is MEAYDICKFWKLDMLEEFSQIVLKGKKKIILDIPSPSQQNKSDIVSLCPADSPETCNSSIPDWLVKVMRKENGYDPKLIIKRRVLCTTDLRKNQGCLSMHLSKLEKSDFLTEDETRFLDEDFLKAKRDGLKVFLVDPESDKHVVYLKKWNGNTVWKYVLSHGWNNVIDKKIFKVNDVIEIWSFRDGSGKLCFALSSPTRCGRSSSGHSS.

Residues 101–198 (LSKLEKSDFL…KLCFALSSPT (98 aa)) constitute a DNA-binding region (TF-B3).

It localises to the nucleus. The sequence is that of B3 domain-containing protein At2g31420 from Arabidopsis thaliana (Mouse-ear cress).